A 309-amino-acid chain; its full sequence is Peptidyl-prolyl cis-trans isomerase 9 (309 aa).

The PPIase cyclophilin-type domain occupies 8 to 173 (FLDISVDENL…AKVLISNCGE (166 aa)). 4 stretches are compositionally biased toward basic and acidic residues: residues 217-229 (NEKK…DKRR), 239-265 (RSHE…RDEN), 280-289 (ERSATPEHWR), and 296-309 (WVHD…EDLV). The disordered stretch occupies residues 217 to 309 (NEKKHEMRND…SHKHPEEDLV (93 aa)).

Belongs to the cyclophilin-type PPIase family. As to expression, co-expressed with pdi-1 in the syncytial hypodermis.

The enzyme catalyses [protein]-peptidylproline (omega=180) = [protein]-peptidylproline (omega=0). Functionally, PPIases accelerate the folding of proteins. It catalyzes the cis-trans isomerization of proline imidic peptide bonds in oligopeptides. Thought to function as a catalyst in the folding and modification of cuticle collagens. The protein is Peptidyl-prolyl cis-trans isomerase 9 (cyn-9) of Caenorhabditis elegans.